The sequence spans 292 residues: MIFALHGRPFKEDNIPYVQHLLYYLQKKEIQFLINESFVDYLVQCNILLPSFFTTFTNKTDLGKPDLMLSIGGDGTLLESATFIGDQNIPLVGINTGRLGFLATTPREELEGSVDELISGSYKLSERTLIKLISDEKLFGDLNFAMNEFALTKRDSSSMITVHTYIDGEFLNSYWADGLLVSTPTGSTGYSLSCGGPLVHPKTENFIITPISPHNLNVRPMIVPDSCHISFEIEGRNQNFLISLDSRAEIVSSNIKLSVKKEDFKIQLVELKNYNYYKTLRSKLNWGLDARN.

The active-site Proton acceptor is Asp74. NAD(+) contacts are provided by residues 74 to 75, 147 to 148, Asp177, and 188 to 193; these read DG, NE, and TGYSLS.

The protein belongs to the NAD kinase family. A divalent metal cation is required as a cofactor.

Its subcellular location is the cytoplasm. The enzyme catalyses NAD(+) + ATP = ADP + NADP(+) + H(+). Functionally, involved in the regulation of the intracellular balance of NAD and NADP, and is a key enzyme in the biosynthesis of NADP. Catalyzes specifically the phosphorylation on 2'-hydroxyl of the adenosine moiety of NAD to yield NADP. The polypeptide is NAD kinase (Cytophaga hutchinsonii (strain ATCC 33406 / DSM 1761 / CIP 103989 / NBRC 15051 / NCIMB 9469 / D465)).